The primary structure comprises 253 residues: Complement C1q subcomponent subunit B (253 aa).

A signal peptide spans 1–25 (MKTQWGEVWTHLLLLLLGFLHVSWA). Gln-26 carries the pyrrolidone carboxylic acid modification. In terms of domain architecture, Collagen-like spans 29–112 (CTGPPGIPGI…GPRGPKGDSG (84 aa)). Residues Pro-33, Pro-36, Pro-39, Pro-51, and Pro-54 each carry the 4-hydroxyproline modification. The interval 35 to 115 (IPGIPGVPGV…GPKGDSGDYG (81 aa)) is disordered. Lys-57 and Lys-60 each carry 5-hydroxylysine. Position 63 is a 4-hydroxyproline (Pro-63). Lys-75 carries the post-translational modification 5-hydroxylysine. A compositionally biased stretch (low complexity) spans 78–96 (PGIPGTPGKVGPKGPVGPK). Pro-81 and Pro-84 each carry 4-hydroxyproline. 5-hydroxylysine occurs at positions 90 and 96. At Pro-99 the chain carries 4-hydroxyproline. 5-hydroxylysine is present on Lys-108. Residues 115–253 (GATQKVAFSA…GFLLFPDMDA (139 aa)) enclose the C1q domain. A disulfide bridge connects residues Cys-179 and Cys-198. Positions 199, 200, and 206 each coordinate Ca(2+).

As to quaternary structure, core component of the complement C1 complex, a calcium-dependent complex composed of 1 molecule of the C1Q subcomplex, 2 molecules of C1R and 2 molecules of C1S. The C1Q subcomplex is composed 18 subunits: 3 chains of C1QA, C1QB, and C1QC trimerize to form 6 collagen-like triple helices connected to six globular ligand-recognition modules (C1q domain). Hydroxylated on lysine and proline residues. Hydroxylated lysine residues can be glycosylated. Mouse C1Q contains up to 64.0 hydroxylysine-galactosylglucose residues. Total percentage hydroxylysine residues glycosylated is 95.1%. Contains no hydroxylysine-monosaccharides. As to expression, highest expression in thioglycolate-activated peritoneal macrophages. Also found in spleen, thymus and heart. Very weak expression liver, kidney, lung and intestine.

It is found in the secreted. The protein localises to the cell surface. The C1Q subcomplex is inhibited by sulfated molecules, such as triterpenoid sulfates, heparan sulfate, or chondroitin sulfates. Core component of the complement C1 complex, a multiprotein complex that initiates the classical pathway of the complement system, a cascade of proteins that leads to phagocytosis and breakdown of pathogens and signaling that strengthens the adaptive immune system. The classical complement pathway is initiated by the C1Q subcomplex of the C1 complex, which specifically binds IgG or IgM immunoglobulins complexed with antigens, forming antigen-antibody complexes on the surface of pathogens: C1QA, together with C1QB and C1QC, specifically recognizes and binds the Fc regions of IgG or IgM via its C1q domain. Immunoglobulin-binding activates the proenzyme C1R, which cleaves C1S, initiating the proteolytic cascade of the complement system. The C1Q subcomplex is activated by a hexamer of IgG complexed with antigens, while it is activated by a pentameric IgM. The C1Q subcomplex also recognizes and binds phosphatidylserine exposed on the surface of cells undergoing programmed cell death, possibly promoting activation of the complement system. This is Complement C1q subcomponent subunit B from Mus musculus (Mouse).